We begin with the raw amino-acid sequence, 170 residues long: Inducible metalloproteinase inhibitor protein (170 aa).

Positions 1-19 (MKCLLYLCLWCYCVLVSSS) are cleaved as a signal peptide. N-linked (GlcNAc...) asparagine glycosylation is found at Asn48 and Asn149.

Cleaved. In terms of processing, five disulfide bonds are present. When artificially cleaved by thermolysin between Asn-56 and Ile-57, the two obtained chains (called heavy and light chains) remain linked. Post-translationally, the N-terminus is blocked.

Functionally, inhibits thermolysin, bacillolysin and pseudolysin, B.polymyxa metalloprotease and human MMP1 and MMP3. No activity on trypsin or cysteine protease papain. This chain is Inducible metalloproteinase inhibitor protein (IMPI), found in Galleria mellonella (Greater wax moth).